The primary structure comprises 146 residues: 3-hydroxyacyl-[acyl-carrier-protein] dehydratase FabZ (146 aa).

His48 is an active-site residue.

It belongs to the thioester dehydratase family. FabZ subfamily.

The protein localises to the cytoplasm. The enzyme catalyses a (3R)-hydroxyacyl-[ACP] = a (2E)-enoyl-[ACP] + H2O. Its function is as follows. Involved in unsaturated fatty acids biosynthesis. Catalyzes the dehydration of short chain beta-hydroxyacyl-ACPs and long chain saturated and unsaturated beta-hydroxyacyl-ACPs. This Teredinibacter turnerae (strain ATCC 39867 / T7901) protein is 3-hydroxyacyl-[acyl-carrier-protein] dehydratase FabZ.